A 384-amino-acid chain; its full sequence is 3,7-dimethylxanthine N-methyltransferase 1 (384 aa).

S-adenosyl-L-homocysteine-binding residues include Tyr-18, Cys-61, Asn-66, Asp-100, Leu-101, Ser-139, Phe-140, and Cys-156. Position 157 (Tyr-157) interacts with theobromine. Residue Cys-158 participates in S-adenosyl-L-homocysteine binding. Residues His-160 and Trp-161 each coordinate theobromine. Asn-178 is a binding site for Mg(2+). Residue Ser-237 coordinates theobromine. Mg(2+)-binding residues include Asp-260, Phe-262, and Asn-263. Tyr-368 is a theobromine binding site.

It belongs to the methyltransferase superfamily. Type-7 methyltransferase family. Requires Mg(2+) as cofactor. As to expression, highly expressed in developing endosperm and immature fruits (grains). Detected in young leaves and flower buds, but not in mature fruits.

It carries out the reaction theobromine + S-adenosyl-L-methionine = caffeine + S-adenosyl-L-homocysteine + H(+). It catalyses the reaction 1,7-dimethylxanthine + S-adenosyl-L-methionine = caffeine + S-adenosyl-L-homocysteine + H(+). The catalysed reaction is 7-methylxanthine + S-adenosyl-L-methionine = theobromine + S-adenosyl-L-homocysteine + H(+). It functions in the pathway alkaloid biosynthesis. Functionally, involved in the biosynthesis of caffeine. Catalyzes the conversion of 7-methylxanthine to caffeine, likely via theobromine as an intermediate. The polypeptide is 3,7-dimethylxanthine N-methyltransferase 1 (Coffea arabica (Arabian coffee)).